The chain runs to 510 residues: NAD(P)H-quinone oxidoreductase subunit 2 A, chloroplastic (510 aa).

A run of 12 helical transmembrane segments spans residues 24 to 44, 59 to 79, 99 to 119, 124 to 144, 149 to 169, 183 to 203, 229 to 249, 295 to 315, 323 to 343, 354 to 374, 395 to 415, and 418 to 438; these read LLLFHGSFIFPECILIFGLIL, WFYFISSTTLVMSITALLFRW, IFQFLILLCSTLCIPLSVEYI, MAITEFLLFVLTATLGGMFLC, LITLFVAPECFSLCSYLLSGY, YLLMGGASSSILVHGFSWLYG, ISIALISITVGIGFKLSPAPF, WHLLLEILAILSMILGNLIAI, MLAYSSIGQIGYVIIGIIVGD, YMLFYISMNLGTFACIVSFGL, ALSLALCLLSLGGLPPLAGFF, and LHLFWCGWQAGLYFLVSIGLL.

This sequence belongs to the complex I subunit 2 family. As to quaternary structure, NDH is composed of at least 16 different subunits, 5 of which are encoded in the nucleus.

Its subcellular location is the plastid. The protein localises to the chloroplast thylakoid membrane. The catalysed reaction is a plastoquinone + NADH + (n+1) H(+)(in) = a plastoquinol + NAD(+) + n H(+)(out). The enzyme catalyses a plastoquinone + NADPH + (n+1) H(+)(in) = a plastoquinol + NADP(+) + n H(+)(out). NDH shuttles electrons from NAD(P)H:plastoquinone, via FMN and iron-sulfur (Fe-S) centers, to quinones in the photosynthetic chain and possibly in a chloroplast respiratory chain. The immediate electron acceptor for the enzyme in this species is believed to be plastoquinone. Couples the redox reaction to proton translocation, and thus conserves the redox energy in a proton gradient. The sequence is that of NAD(P)H-quinone oxidoreductase subunit 2 A, chloroplastic from Dioscorea elephantipes (Elephant's foot yam).